The sequence spans 87 residues: Cytochrome c6 (87 aa).

Heme c-binding residues include C14, C17, H18, and M58.

Belongs to the cytochrome c family. PetJ subfamily. In terms of assembly, monomer. Binds 1 heme c group covalently per subunit.

It is found in the cellular thylakoid lumen. Functions as an electron carrier between membrane-bound cytochrome b6-f and photosystem I in oxygenic photosynthesis. The polypeptide is Cytochrome c6 (petJ) (Parathermosynechococcus lividus (Thermostichus lividus)).